The primary structure comprises 436 residues: Transcription termination factor Rho (436 aa).

Residues 65-140 (LVFVKGVLEI…IRMESVNGLP (76 aa)) form the Rho RNA-BD domain. Residues 185-190 (GKGQRG), 197-202 (KAGKTV), and arginine 228 each bind ATP.

The protein belongs to the Rho family. In terms of assembly, homohexamer. The homohexamer assembles into an open ring structure.

In terms of biological role, facilitates transcription termination by a mechanism that involves Rho binding to the nascent RNA, activation of Rho's RNA-dependent ATPase activity, and release of the mRNA from the DNA template. This is Transcription termination factor Rho from Aquifex aeolicus (strain VF5).